A 307-amino-acid chain; its full sequence is UDP-N-acetylenolpyruvoylglucosamine reductase (307 aa).

The region spanning 33-197 (TGGNADFYIT…LEAAFTLAPG (165 aa)) is the FAD-binding PCMH-type domain. Arg-176 is a catalytic residue. Ser-226 acts as the Proton donor in catalysis. Glu-296 is a catalytic residue.

It belongs to the MurB family. Requires FAD as cofactor.

It is found in the cytoplasm. It catalyses the reaction UDP-N-acetyl-alpha-D-muramate + NADP(+) = UDP-N-acetyl-3-O-(1-carboxyvinyl)-alpha-D-glucosamine + NADPH + H(+). The protein operates within cell wall biogenesis; peptidoglycan biosynthesis. In terms of biological role, cell wall formation. The chain is UDP-N-acetylenolpyruvoylglucosamine reductase from Staphylococcus aureus (strain MRSA252).